Consider the following 360-residue polypeptide: Alanine racemase (360 aa).

The active-site Proton acceptor; specific for D-alanine is lysine 33. Lysine 33 is modified (N6-(pyridoxal phosphate)lysine). Arginine 129 provides a ligand contact to substrate. Tyrosine 253 (proton acceptor; specific for L-alanine) is an active-site residue. Substrate is bound at residue methionine 301.

This sequence belongs to the alanine racemase family. Requires pyridoxal 5'-phosphate as cofactor.

It carries out the reaction L-alanine = D-alanine. It functions in the pathway amino-acid biosynthesis; D-alanine biosynthesis; D-alanine from L-alanine: step 1/1. Its function is as follows. Catalyzes the interconversion of L-alanine and D-alanine. May also act on other amino acids. In Xanthomonas campestris pv. campestris (strain 8004), this protein is Alanine racemase (alr).